We begin with the raw amino-acid sequence, 107 residues long: Phosphoribosyl-ATP pyrophosphatase (107 aa).

Belongs to the PRA-PH family.

Its subcellular location is the cytoplasm. It catalyses the reaction 1-(5-phospho-beta-D-ribosyl)-ATP + H2O = 1-(5-phospho-beta-D-ribosyl)-5'-AMP + diphosphate + H(+). It functions in the pathway amino-acid biosynthesis; L-histidine biosynthesis; L-histidine from 5-phospho-alpha-D-ribose 1-diphosphate: step 2/9. The polypeptide is Phosphoribosyl-ATP pyrophosphatase (Methylobacterium nodulans (strain LMG 21967 / CNCM I-2342 / ORS 2060)).